Consider the following 423-residue polypeptide: uncharacterized protein (423 aa).

This sequence belongs to the asfivirus E423R family.

The protein localises to the virion. This is an uncharacterized protein from Ornithodoros (relapsing fever ticks).